Consider the following 657-residue polypeptide: Glycogen debranching enzyme (657 aa).

The Nucleophile role is filled by Asp-336. Catalysis depends on Glu-371, which acts as the Proton donor. Residues 460–479 (ANGEENRDGTNNNYSNNHGK) form a disordered region.

This sequence belongs to the glycosyl hydrolase 13 family.

The catalysed reaction is Hydrolysis of (1-&gt;6)-alpha-D-glucosidic linkages to branches with degrees of polymerization of three or four glucose residues in limit dextrin.. It participates in glycan degradation; glycogen degradation. Its function is as follows. Removes maltotriose and maltotetraose chains that are attached by 1,6-alpha-linkage to the limit dextrin main chain, generating a debranched limit dextrin. This is Glycogen debranching enzyme from Escherichia coli O6:K15:H31 (strain 536 / UPEC).